The chain runs to 394 residues: Argininosuccinate synthase (394 aa).

ATP-binding positions include 7 to 15 and Ala-35; that span reads AYSGGLDTS. Tyr-85 lines the L-citrulline pocket. Gly-115 is an ATP binding site. Residues Thr-117, Asn-121, and Asp-122 each contribute to the L-aspartate site. Position 121 (Asn-121) interacts with L-citrulline. 5 residues coordinate L-citrulline: Arg-125, Ser-174, Ser-183, Glu-258, and Tyr-270.

The protein belongs to the argininosuccinate synthase family. Type 1 subfamily. As to quaternary structure, homotetramer.

It localises to the cytoplasm. The enzyme catalyses L-citrulline + L-aspartate + ATP = 2-(N(omega)-L-arginino)succinate + AMP + diphosphate + H(+). Its pathway is amino-acid biosynthesis; L-arginine biosynthesis; L-arginine from L-ornithine and carbamoyl phosphate: step 2/3. The sequence is that of Argininosuccinate synthase from Methanopyrus kandleri (strain AV19 / DSM 6324 / JCM 9639 / NBRC 100938).